Here is a 555-residue protein sequence, read N- to C-terminus: Lysine--tRNA ligase (555 aa).

A 'HIGH' region motif is present at residues 37 to 45 (TSGRLHVGN). Residues 301–305 (AMSSS) carry the 'KMSKS' region motif.

It belongs to the class-I aminoacyl-tRNA synthetase family.

It is found in the cytoplasm. It catalyses the reaction tRNA(Lys) + L-lysine + ATP = L-lysyl-tRNA(Lys) + AMP + diphosphate. The protein is Lysine--tRNA ligase of Methanopyrus kandleri (strain AV19 / DSM 6324 / JCM 9639 / NBRC 100938).